The primary structure comprises 288 residues: Large ribosomal subunit protein uL2 (288 aa).

Disordered stretches follow at residues 1 to 46 (MAIH…RNVY) and 226 to 288 (MVMN…RGKK). Residues 235 to 248 (NGGGQGKSKGGGGR) are compositionally biased toward gly residues. Basic residues predominate over residues 279–288 (HNGRKPRGKK).

The protein belongs to the universal ribosomal protein uL2 family. Part of the 50S ribosomal subunit. Forms a bridge to the 30S subunit in the 70S ribosome.

Functionally, one of the primary rRNA binding proteins. Required for association of the 30S and 50S subunits to form the 70S ribosome, for tRNA binding and peptide bond formation. It has been suggested to have peptidyltransferase activity; this is somewhat controversial. Makes several contacts with the 16S rRNA in the 70S ribosome. The polypeptide is Large ribosomal subunit protein uL2 (Opitutus terrae (strain DSM 11246 / JCM 15787 / PB90-1)).